We begin with the raw amino-acid sequence, 97 residues long: Putative membrane protein insertion efficiency factor (97 aa).

A disordered region spans residues 77-97; the sequence is VPDAPASPSPSSSCSCKGPHP. Positions 85–97 are enriched in low complexity; sequence SPSSSCSCKGPHP.

Belongs to the UPF0161 family.

The protein resides in the cell inner membrane. Its function is as follows. Could be involved in insertion of integral membrane proteins into the membrane. This Xanthomonas euvesicatoria pv. vesicatoria (strain 85-10) (Xanthomonas campestris pv. vesicatoria) protein is Putative membrane protein insertion efficiency factor.